The primary structure comprises 96 residues: Phosphoribosyl-ATP pyrophosphatase (96 aa).

Belongs to the PRA-PH family.

The protein resides in the cytoplasm. The enzyme catalyses 1-(5-phospho-beta-D-ribosyl)-ATP + H2O = 1-(5-phospho-beta-D-ribosyl)-5'-AMP + diphosphate + H(+). The protein operates within amino-acid biosynthesis; L-histidine biosynthesis; L-histidine from 5-phospho-alpha-D-ribose 1-diphosphate: step 2/9. In Methanococcus maripaludis (strain C6 / ATCC BAA-1332), this protein is Phosphoribosyl-ATP pyrophosphatase.